Here is a 399-residue protein sequence, read N- to C-terminus: Argininosuccinate synthase (399 aa).

8–16 (AYSGGLDTT) is a binding site for ATP. Position 87 (tyrosine 87) interacts with L-citrulline. Residue glycine 117 participates in ATP binding. L-aspartate contacts are provided by threonine 119, asparagine 123, and aspartate 124. Asparagine 123 lines the L-citrulline pocket. L-citrulline contacts are provided by arginine 127, serine 175, glutamate 259, and tyrosine 271.

Belongs to the argininosuccinate synthase family. Type 1 subfamily. As to quaternary structure, homotetramer.

It is found in the cytoplasm. It carries out the reaction L-citrulline + L-aspartate + ATP = 2-(N(omega)-L-arginino)succinate + AMP + diphosphate + H(+). Its pathway is amino-acid biosynthesis; L-arginine biosynthesis; L-arginine from L-ornithine and carbamoyl phosphate: step 2/3. This Corynebacterium urealyticum (strain ATCC 43042 / DSM 7109) protein is Argininosuccinate synthase.